The chain runs to 78 residues: UPF0612 protein new22 (78 aa).

It belongs to the UPF0612 family.

The polypeptide is UPF0612 protein new22 (new22) (Schizosaccharomyces pombe (strain 972 / ATCC 24843) (Fission yeast)).